Reading from the N-terminus, the 584-residue chain is Endogenous retrovirus group FC1 Env polyprotein (584 aa).

Positions 1 to 22 are cleaved as a signal peptide; the sequence is MARPSPLCLLLLLTLLTPIVPS. The Extracellular segment spans residues 23–518; it reads NSLLTEPPFR…GWWQSPLTTW (496 aa). N-linked (GlcNAc...) asparagine glycans are attached at residues Asn-69 and Asn-247. The CXXC signature appears at 251-254; the sequence is CFLC. Asn-272, Asn-276, Asn-308, Asn-313, Asn-322, Asn-334, Asn-342, and Asn-346 each carry an N-linked (GlcNAc...) asparagine glycan. The interval 384 to 404 is fusion peptide; that stretch reads AVFPPLVIGVSLTSSLVASGL. The CKS-17 signature appears at 449–465; it reads MQNRRALDLLTADKGGT. Cys-466 and Cys-473 are oxidised to a cystine. Positions 466-474 match the CX6CC motif; sequence CMFLGEECC. An N-linked (GlcNAc...) asparagine glycan is attached at Asn-478. A helical membrane pass occupies residues 519 to 539; the sequence is IIPFISPILIICLLLLIAPCV. Residues 540 to 584 lie on the Cytoplasmic side of the membrane; it reads LKFIKNRISEVSRVTVNQMLLHPYSRLPTSEDHYDDALTQQEAAR.

Belongs to the gamma type-C retroviral envelope protein family. HERV class-I F(c)1 env subfamily. The surface (SU) and transmembrane (TM) proteins form a heterodimer. SU and TM are attached by noncovalent interactions or by a labile interchain disulfide bond. In terms of processing, specific enzymatic cleavages in vivo yield the mature SU and TM proteins. The CXXC motif is highly conserved across a broad range of retroviral envelope proteins. It is thought to participate in the formation of a labile disulfide bond possibly with the CX6CC motif present in the transmembrane protein. In terms of tissue distribution, low expression in skin, testis and trachea.

It localises to the virion. The protein localises to the cell membrane. Functionally, retroviral envelope proteins mediate receptor recognition and membrane fusion during early infection. Endogenous envelope proteins may have kept, lost or modified their original function during evolution. This endogenous envelope protein has lost its original fusogenic properties. SU mediates receptor recognition. Its function is as follows. TM anchors the envelope heterodimer to the viral membrane through one transmembrane domain. The other hydrophobic domain, called fusion peptide, mediates fusion of the viral membrane with the target cell membrane. The sequence is that of Endogenous retrovirus group FC1 Env polyprotein (ERVFC1) from Homo sapiens (Human).